Reading from the N-terminus, the 355-residue chain is Polyferredoxin protein FwdF (355 aa).

4Fe-4S ferredoxin-type domains lie at 24 to 53, 64 to 93, 108 to 137, 147 to 176, 187 to 216, 235 to 264, 267 to 296, and 304 to 333; these read RELC…MGPL, PKLD…LKIN, RDIK…VERE, GEIN…LKYN, TDIE…VICY, GKTV…VEKP, GELI…FPKP, and PRII…VKRT. Residues C33, C36, C39, C43, C73, C76, C79, C83, C117, C120, C123, C127, C156, C159, C162, C166, C196, C199, C202, C206, C244, C247, C250, C254, C276, C279, C282, C286, C313, C316, C319, and C323 each coordinate [4Fe-4S] cluster.

The cofactor is [4Fe-4S] cluster.

This chain is Polyferredoxin protein FwdF (fwdF), found in Methanocaldococcus jannaschii (strain ATCC 43067 / DSM 2661 / JAL-1 / JCM 10045 / NBRC 100440) (Methanococcus jannaschii).